The following is a 418-amino-acid chain: L-rhamnose isomerase (418 aa).

Mn(2+)-binding residues include H262, D294, and D296.

It belongs to the rhamnose isomerase family. Homotetramer. Mn(2+) serves as cofactor.

Its subcellular location is the cytoplasm. The catalysed reaction is L-rhamnopyranose = L-rhamnulose. Its pathway is carbohydrate degradation; L-rhamnose degradation; glycerone phosphate from L-rhamnose: step 1/3. Functionally, catalyzes the interconversion of L-rhamnose and L-rhamnulose. The chain is L-rhamnose isomerase from Yersinia pestis bv. Antiqua (strain Antiqua).